The chain runs to 1337 residues: Zinc finger protein 335 (1337 aa).

Disordered stretches follow at residues 1-108 (MEEN…LVHS) and 198-226 (GPTSTSACLEPPEEPQGDPSSVAQQPPAP). Composition is skewed to low complexity over residues 31 to 45 (TSEAVSADSSDAATV) and 54 to 63 (SGVGQSSDGG). The segment at 248–271 (FKCKMCQYRSSTKATLLRHMRERH) adopts a C2H2-type 1 zinc-finger fold. Residues 278 to 444 (AAAAATGKRG…PPRRRGRPSR (167 aa)) form a disordered region. Acidic residues predominate over residues 302–332 (DRPEEEEEDDDIVDAGAIDDLEEDSDYNPAE). Residues 351–362 (RPRRRPGRPRKL) are compositionally biased toward basic residues. Basic and acidic residues predominate over residues 363–372 (PRLETSDLHD). Polar residues predominate over residues 378-388 (LVSSQSTQSPP). C2H2-type zinc fingers lie at residues 466–488 (YLCRICGSRFLSHEDLRFHVNSH), 496–518 (FRCLQCSYRSRRWSSLKEHMFNH), 524–546 (YKCDECSYTSVYRKDVIRHAAVH), 563–585 (FPCPVCGRVYPMQKRLTQHMKTH), 591–613 (HMCDKCGKSFKKRYTFKMHLLTH), 622–644 (FKCEFCEFVCEDKKALLNHQLSH), 650–673 (FKCSFCPYRTFREDFLLSHVAVKH), and 679–702 (FACEYCHFSTRHKKNLRLHVRCRH). 2 disordered regions span residues 733–767 (LKQQHSTAPGPPLSSPGPEAPQEPAPFQSPETPPL) and 963–999 (QCGGPPRDGSEVLSPTKTHHMGGSQGSSTPPPAASHT). Over residues 741 to 756 (PGPPLSSPGPEAPQEP) the composition is skewed to pro residues. Serine 976 and serine 1007 each carry phosphoserine. 4 consecutive C2H2-type zinc fingers follow at residues 1019–1041 (FSCKVCSEAFPSRAEMESHKRAH), 1047–1069 (FKCPDCPFSARQWPEVRAHMAQH), 1075–1097 (HQCNQCSFASKNKKDLRRHMLTH), and 1103–1126 (FSCHVCGQRFNRNGHLKFHIQRLH). A Glycyl lysine isopeptide (Lys-Gly) (interchain with G-Cter in SUMO2) cross-link involves residue lysine 1022. At serine 1149 the chain carries Phosphoserine.

The protein belongs to the krueppel C2H2-type zinc-finger protein family. As to quaternary structure, interacts with NCOA6; may enhance ligand-dependent transcriptional activation by nuclear hormone receptors. Interacts with CNOT6. Interacts with CNOT9; the interaction is direct. Component of a nuclear receptor-mediated transcription complex composed of at least ZNF335, CCAR2 and EMSY; the complex stimulates the transcription of nuclear receptor target genes such as SOX9 and HOXA1. Within the complex interacts with EMSY and interacts (via C-terminus) with CCAR2. Interacts with members of histone H3'Lys4'(H3K4) methyltransferase complexes ASH2L, CXXC1, KMT2A/MLL1, RBBP5, SETD1A and WDR5. Component of a histone methylation complex composed of at least ZNF335, RBBP5, ASH2L and WDR5; the complex may have histone H3-specific methyltransferase activity, however does not have specificity for 'Lys-4' of histone H3. Interacts with RBBP5 and WDR5. Interacts with ASHL2. Components of this complex may associate with components of the ZNF335-CCAR2-EMSY nuclear receptor-mediated transcription complex to form a complex at least composed of ZNF335, HCFC1, CCAR2, EMSY, MKI67, RBBP5, ASH2L and WDR5. Within this complex also interacts with HCFC1 and MKI67. As to expression, expressed at low levels in cerebral cortex, hippocampus and cerebellum (at protein level).

It localises to the nucleus. Component or associated component of some histone methyltransferase complexes may regulate transcription through recruitment of those complexes on gene promoters. Enhances ligand-dependent transcriptional activation by nuclear hormone receptors. Plays an important role in neural progenitor cell proliferation and self-renewal through the regulation of specific genes involved brain development, including REST. Also controls the expression of genes involved in somatic development and regulates, for instance, lymphoblast proliferation. This Mus musculus (Mouse) protein is Zinc finger protein 335 (Znf335).